The chain runs to 158 residues: Cysteine proteinase inhibitor 4 (158 aa).

A signal peptide spans 1-24 (MAARCPVGVASVLLLIVLVTVASA). The segment at 26 to 51 (SGARSGGGGGGGIRELRGGGAGRRVG) is disordered. Residues 29–49 (RSGGGGGGGIRELRGGGAGRR) are compositionally biased toward gly residues. In terms of domain architecture, Cystatin spans 51–116 (GGRTEVRDVE…KYYLRVAAAE (66 aa)). Residues 101 to 105 (QVVSG) carry the Secondary area of contact motif.

It belongs to the cystatin family. Phytocystatin subfamily.

The protein resides in the secreted. Specific inhibitor of cysteine proteinases. Probably involved in the regulation of endogenous processes and in defense against pests and pathogens. This Oryza sativa subsp. japonica (Rice) protein is Cysteine proteinase inhibitor 4.